The primary structure comprises 271 residues: MSVFSDLPLVIEPSDLAPRLGAPELILVDLTSAARYAEGHIPGARFVDPKRTQWGQPPAPGLLPAKADLEALFGELGHRPEATYVVYDDEGGGWAGRFIWLLDVIGHHHYHYLNGGLPAWIADAQALDREVPAPVGGPLPLTLHDEPSATREYLQSRLGAADLAVWDARNPSEYAGTKVLAAKAGHVPGAINFEWTAGMDPARALRIRADIAEVLEDLGITPDKEVITHCQTHHRSGFTYLVAKALGYPRVKGYAGSWSEWGNHPDTPVEV.

2 consecutive Rhodanese domains span residues 21-129 (GAPE…ALDR) and 159-270 (GAAD…TPVE). The active-site Cysteine persulfide intermediate is Cys230.

Its subcellular location is the cytoplasm. It carries out the reaction thiosulfate + hydrogen cyanide = thiocyanate + sulfite + 2 H(+). In terms of biological role, catalyzes the sulfur transfer reaction from thiosulfate to cyanide, thus converting cyanide to the less toxic thiocyanate. Contributes to P.aeruginosa survival under cyanogenic conditions, and thus provides the bacterium with a defense mechanism against endogenous cyanide toxicity. Is the main cytoplasmic rhodanese in P.aeruginosa, accounting for 90% of total rhodanese activity. In Pseudomonas aeruginosa (strain ATCC 15692 / DSM 22644 / CIP 104116 / JCM 14847 / LMG 12228 / 1C / PRS 101 / PAO1), this protein is Thiosulfate sulfurtransferase.